A 127-amino-acid chain; its full sequence is Fumarate reductase subunit C (127 aa).

3 helical membrane-spanning segments follow: residues 30–50 (ATVL…GSLV), 67–87 (LVIA…QTFF), and 107–127 (IIVL…LIVV).

This sequence belongs to the FrdC family. Part of an enzyme complex containing four subunits: a flavoprotein (FrdA), an iron-sulfur protein (FrdB), and two hydrophobic anchor proteins (FrdC and FrdD).

Its subcellular location is the cell inner membrane. Its function is as follows. Anchors the catalytic components of the fumarate reductase complex to the cell membrane, binds quinones. In Vibrio cholerae serotype O1 (strain ATCC 39541 / Classical Ogawa 395 / O395), this protein is Fumarate reductase subunit C.